The chain runs to 234 residues: Large ribosomal subunit protein uL1 (234 aa).

The protein belongs to the universal ribosomal protein uL1 family. In terms of assembly, part of the 50S ribosomal subunit.

Binds directly to 23S rRNA. The L1 stalk is quite mobile in the ribosome, and is involved in E site tRNA release. In terms of biological role, protein L1 is also a translational repressor protein, it controls the translation of the L11 operon by binding to its mRNA. The protein is Large ribosomal subunit protein uL1 of Desulfosudis oleivorans (strain DSM 6200 / JCM 39069 / Hxd3) (Desulfococcus oleovorans).